We begin with the raw amino-acid sequence, 304 residues long: Retrotransposon Gag-like protein 4 (304 aa).

The segment at 276-293 adopts a CCHC-type zinc-finger fold; sequence QLCVYCNQAGHFTRDCLA.

In adults, expressed in brain, eye, kidney, ovary and testis. Weakly expressed in thymus, heart and muscle.

In terms of biological role, involved in cognitive function in the brain, possibly via the noradrenergic system. The sequence is that of Retrotransposon Gag-like protein 4 from Mus musculus (Mouse).